The following is a 141-amino-acid chain: Large ribosomal subunit protein uL16 (141 aa).

This sequence belongs to the universal ribosomal protein uL16 family. As to quaternary structure, part of the 50S ribosomal subunit.

Its function is as follows. Binds 23S rRNA and is also seen to make contacts with the A and possibly P site tRNAs. In Rhodospirillum centenum (strain ATCC 51521 / SW), this protein is Large ribosomal subunit protein uL16.